We begin with the raw amino-acid sequence, 184 residues long: dCTP deaminase (184 aa).

Residues 107-112, 131-133, Q152, Y166, and Q176 each bind dCTP; these read KSTYAR and TLE. Catalysis depends on E133, which acts as the Proton donor/acceptor.

It belongs to the dCTP deaminase family. In terms of assembly, homotrimer.

It carries out the reaction dCTP + H2O + H(+) = dUTP + NH4(+). Its pathway is pyrimidine metabolism; dUMP biosynthesis; dUMP from dCTP (dUTP route): step 1/2. In terms of biological role, catalyzes the deamination of dCTP to dUTP. The protein is dCTP deaminase of Gemmatimonas aurantiaca (strain DSM 14586 / JCM 11422 / NBRC 100505 / T-27).